We begin with the raw amino-acid sequence, 540 residues long: Chaperonin GroEL (540 aa).

ATP-binding positions include 29-32 (TLGP), 86-90 (DGTTT), glycine 413, and aspartate 493. Positions 520 to 540 (AEKPEPKPAPGPADPGAGMDF) are disordered.

It belongs to the chaperonin (HSP60) family. In terms of assembly, forms a cylinder of 14 subunits composed of two heptameric rings stacked back-to-back. Interacts with the co-chaperonin GroES.

The protein localises to the cytoplasm. The catalysed reaction is ATP + H2O + a folded polypeptide = ADP + phosphate + an unfolded polypeptide.. Its function is as follows. Together with its co-chaperonin GroES, plays an essential role in assisting protein folding. The GroEL-GroES system forms a nano-cage that allows encapsulation of the non-native substrate proteins and provides a physical environment optimized to promote and accelerate protein folding. The polypeptide is Chaperonin GroEL (Tropheryma whipplei (strain TW08/27) (Whipple's bacillus)).